A 243-amino-acid chain; its full sequence is DNA repair protein RecO (243 aa).

This sequence belongs to the RecO family.

Functionally, involved in DNA repair and RecF pathway recombination. The sequence is that of DNA repair protein RecO from Chlamydia trachomatis serovar L2 (strain ATCC VR-902B / DSM 19102 / 434/Bu).